The chain runs to 142 residues: Hemoglobin subunit alpha (142 aa).

The Globin domain maps to 2–142; it reads VLSPADKSNV…VSTVLTSKYR (141 aa). At serine 4 the chain carries Phosphoserine. N6-succinyllysine occurs at positions 8 and 12. Lysine 17 carries the post-translational modification N6-acetyllysine; alternate. N6-succinyllysine; alternate is present on lysine 17. Phosphotyrosine is present on tyrosine 25. Phosphoserine is present on serine 36. Lysine 41 bears the N6-succinyllysine mark. Phosphoserine is present on serine 50. Histidine 59 contacts O2. Position 88 (histidine 88) interacts with heme b. A Phosphoserine modification is found at serine 103. The residue at position 109 (threonine 109) is a Phosphothreonine. At serine 125 the chain carries Phosphoserine. Phosphothreonine is present on residues threonine 135 and threonine 138. Serine 139 is modified (phosphoserine).

Belongs to the globin family. As to quaternary structure, heterotetramer of two alpha chains and two beta chains. In terms of tissue distribution, red blood cells.

Its function is as follows. Involved in oxygen transport from the lung to the various peripheral tissues. Hemopressin acts as an antagonist peptide of the cannabinoid receptor CNR1. Hemopressin-binding efficiently blocks cannabinoid receptor CNR1 and subsequent signaling. The sequence is that of Hemoglobin subunit alpha (HBA) from Ursus maritimus (Polar bear).